We begin with the raw amino-acid sequence, 658 residues long: Glycogen debranching enzyme (658 aa).

The active-site Nucleophile is the Asp335. The active-site Proton donor is the Glu370.

The protein belongs to the glycosyl hydrolase 13 family.

It catalyses the reaction Hydrolysis of (1-&gt;6)-alpha-D-glucosidic linkages to branches with degrees of polymerization of three or four glucose residues in limit dextrin.. It participates in glycan degradation; glycogen degradation. Functionally, removes maltotriose and maltotetraose chains that are attached by 1,6-alpha-linkage to the limit dextrin main chain, generating a debranched limit dextrin. This Erwinia tasmaniensis (strain DSM 17950 / CFBP 7177 / CIP 109463 / NCPPB 4357 / Et1/99) protein is Glycogen debranching enzyme.